The primary structure comprises 321 residues: uncharacterized protein (321 aa).

This is an uncharacterized protein from Acanthamoeba polyphaga mimivirus (APMV).